Here is a 91-residue protein sequence, read N- to C-terminus: Large ribosomal subunit protein bL27 (91 aa).

The protein belongs to the bacterial ribosomal protein bL27 family. As to quaternary structure, part of the 50S ribosomal subunit. Contacts protein L18.

Its function is as follows. Binds the 5S and 23S rRNAs and also the tRNA in the P site. This chain is Large ribosomal subunit protein bL27 (rpmA), found in Deinococcus radiodurans (strain ATCC 13939 / DSM 20539 / JCM 16871 / CCUG 27074 / LMG 4051 / NBRC 15346 / NCIMB 9279 / VKM B-1422 / R1).